Here is a 187-residue protein sequence, read N- to C-terminus: Elongation factor P (187 aa).

Belongs to the elongation factor P family.

It is found in the cytoplasm. It functions in the pathway protein biosynthesis; polypeptide chain elongation. Functionally, involved in peptide bond synthesis. Stimulates efficient translation and peptide-bond synthesis on native or reconstituted 70S ribosomes in vitro. Probably functions indirectly by altering the affinity of the ribosome for aminoacyl-tRNA, thus increasing their reactivity as acceptors for peptidyl transferase. This is Elongation factor P from Synechococcus sp. (strain CC9605).